The primary structure comprises 171 residues: Tetratricopeptide repeat protein 9C (171 aa).

TPR repeat units follow at residues 8–41 (AQLY…LRGL), 72–107 (TDCY…QPDN), and 108–141 (AKAL…QPKD).

Belongs to the TTC9 family.

This chain is Tetratricopeptide repeat protein 9C (TTC9C), found in Homo sapiens (Human).